A 762-amino-acid polypeptide reads, in one-letter code: 5-methyltetrahydropteroyltriglutamate--homocysteine methyltransferase (762 aa).

Residues Arg-18–Lys-21 and Lys-112 contribute to the 5-methyltetrahydropteroyltri-L-glutamate site. Residues Ile-435 to Ser-437 and Glu-488 each bind L-homocysteine. Residues Ile-435 to Ser-437 and Glu-488 each bind L-methionine. Residues Arg-519–Cys-520 and Trp-565 each bind 5-methyltetrahydropteroyltri-L-glutamate. Asp-603 contributes to the L-homocysteine binding site. Asp-603 lines the L-methionine pocket. 5-methyltetrahydropteroyltri-L-glutamate is bound at residue Glu-609. Residues His-645, Cys-647, and Glu-669 each coordinate Zn(2+). His-698 (proton donor) is an active-site residue. Zn(2+) is bound at residue Cys-730.

It belongs to the vitamin-B12 independent methionine synthase family. It depends on Zn(2+) as a cofactor.

It carries out the reaction 5-methyltetrahydropteroyltri-L-glutamate + L-homocysteine = tetrahydropteroyltri-L-glutamate + L-methionine. The protein operates within amino-acid biosynthesis; L-methionine biosynthesis via de novo pathway; L-methionine from L-homocysteine (MetE route): step 1/1. Functionally, catalyzes the transfer of a methyl group from 5-methyltetrahydrofolate to homocysteine resulting in methionine formation. This is 5-methyltetrahydropteroyltriglutamate--homocysteine methyltransferase from Bacillus velezensis (strain DSM 23117 / BGSC 10A6 / LMG 26770 / FZB42) (Bacillus amyloliquefaciens subsp. plantarum).